The chain runs to 138 residues: Translation initiation factor 2 subunit beta (138 aa).

Belongs to the eIF-2-beta/eIF-5 family. Heterotrimer composed of an alpha, a beta and a gamma chain.

Functionally, eIF-2 functions in the early steps of protein synthesis by forming a ternary complex with GTP and initiator tRNA. This Methanococcus maripaludis (strain C6 / ATCC BAA-1332) protein is Translation initiation factor 2 subunit beta.